The following is a 323-amino-acid chain: Ubiquinone biosynthesis protein COQ4, mitochondrial (323 aa).

Residues His203, Asp204, His207, and Glu219 each coordinate Zn(2+).

It belongs to the COQ4 family. As to quaternary structure, component of a multi-subunit COQ enzyme complex, composed of at least COQ3, COQ4, COQ5, COQ6, COQ7 and COQ9. Requires Zn(2+) as cofactor.

The protein localises to the mitochondrion inner membrane. It carries out the reaction a 4-hydroxy-3-methoxy-5-(all-trans-polyprenyl)benzoate + H(+) = a 2-methoxy-6-(all-trans-polyprenyl)phenol + CO2. The protein operates within cofactor biosynthesis; ubiquinone biosynthesis. Its function is as follows. Lyase that catalyzes the C1-decarboxylation of 4-hydroxy-3-methoxy-5-(all-trans-polyprenyl)benzoic acid into 2-methoxy-6-(all-trans-polyprenyl)phenol during ubiquinone biosynthesis. The sequence is that of Ubiquinone biosynthesis protein COQ4, mitochondrial from Eremothecium gossypii (strain ATCC 10895 / CBS 109.51 / FGSC 9923 / NRRL Y-1056) (Yeast).